A 580-amino-acid polypeptide reads, in one-letter code: Multidrug resistance-like ATP-binding protein MdlB (580 aa).

Positions 25–310 (IILAFFLLLS…ITIQQSILQQ (286 aa)) constitute an ABC transmembrane type-1 domain. 5 consecutive transmembrane segments (helical) span residues 26 to 46 (ILAF…PILI), 61 to 81 (FQLI…AVFF), 142 to 162 (VGPT…AMFT), 165 to 185 (WHMA…MSIY), and 258 to 278 (LLSA…SIGV). Positions 341 to 575 (INIKNLSFKY…KGFYWKMYNF (235 aa)) constitute an ABC transporter domain. 375–382 (GQTGSGKS) is an ATP binding site.

This sequence belongs to the ABC transporter superfamily. Drug exporter-2 (TC 3.A.1.117) family.

The protein localises to the cell membrane. It carries out the reaction ATP + H2O + xenobioticSide 1 = ADP + phosphate + xenobioticSide 2.. The polypeptide is Multidrug resistance-like ATP-binding protein MdlB (mdlB) (Buchnera aphidicola subsp. Schizaphis graminum (strain Sg)).